The chain runs to 624 residues: (-)-beta-phellandrene synthase 1, chloroplastic (624 aa).

Residues 1–48 constitute a chloroplast transit peptide; sequence MAIVSSVPLASKSCLHKSLISSIHKLKPFCRTIPTLGMSRPGKYVMPS. Asp375, Asp379, and Asp527 together coordinate Mg(2+). Residues 375–379 carry the DDXXD motif motif; sequence DDMYD.

This sequence belongs to the terpene synthase family. Tpsd subfamily. Mg(2+) serves as cofactor. Requires Mn(2+) as cofactor.

The protein resides in the plastid. The protein localises to the chloroplast. The enzyme catalyses (2E)-geranyl diphosphate = (-)-beta-phellandrene + diphosphate. Its pathway is terpene metabolism; oleoresin biosynthesis. Functionally, terpene synthase (TPS) involved in the biosynthesis of monoterpene natural products included in conifer oleoresin secretions and volatile emissions; these compounds contribute to biotic and abiotic stress defense against herbivores and pathogens. Catalyzes the conversion of (2E)-geranyl diphosphate (GPP) to (-)-beta-phellandrene. This chain is (-)-beta-phellandrene synthase 1, chloroplastic, found in Picea sitchensis (Sitka spruce).